The chain runs to 328 residues: DNA repair protein RAD51 homolog 4 (328 aa).

Residues 1 to 83 (MGVLRVGLCP…ELKTSTAILS (83 aa)) are preferentially binds ssDNA. 107–114 (GGPGSGKT) provides a ligand contact to ATP.

Belongs to the RecA family. RAD51 subfamily. In terms of assembly, part of the BCDX2 complex consisting of RAD51B, RAD51C, RAD51D and XRCC2; the complex has a ring-like structure arranged into a flat disc around a central channel. In the absence of DNA, the BCDX2 subcomplex XRCC2:RAD51D formed a multimeric ring structure; in the presence of single-stranded DNA it formed a filamentous structure with the ssDNA. Interacts with SWSAP1 and ZSWIM7; involved in homologous recombination repair. Interacts with BLM; required for stimulation of BLM activity by the BCDX2 subcomplex XRCC2:RAD51D. Expressed in colon, prostate, spleen, testis, ovary, thymus and small intestine. Weakly expressed in leukocytes.

Its subcellular location is the nucleus. It localises to the cytoplasm. It is found in the cytoskeleton. The protein localises to the microtubule organizing center. The protein resides in the centrosome. Its subcellular location is the chromosome. It localises to the telomere. Its function is as follows. Involved in the homologous recombination repair (HRR) pathway of double-stranded DNA breaks arising during DNA replication or induced by DNA-damaging agents. Bind to single-stranded DNA (ssDNA) and has DNA-dependent ATPase activity. Part of the RAD51 paralog protein complex BCDX2 which acts in the BRCA1-BRCA2-dependent HR pathway. Upon DNA damage, BCDX2 acts downstream of BRCA2 recruitment and upstream of RAD51 recruitment. BCDX2 binds predominantly to the intersection of the four duplex arms of the Holliday junction and to junction of replication forks. The BCDX2 complex was originally reported to bind single-stranded DNA, single-stranded gaps in duplex DNA and specifically to nicks in duplex DNA. Involved in telomere maintenance. The BCDX2 subcomplex XRCC2:RAD51D can stimulate Holliday junction resolution by BLM. This is DNA repair protein RAD51 homolog 4 (RAD51D) from Homo sapiens (Human).